A 269-amino-acid chain; its full sequence is Sushi domain-containing protein 3 (269 aa).

The segment at M1–P23 is disordered. Residues M1–K103 are Extracellular-facing. A Sushi domain is found at G30 to A93. Cystine bridges form between C32/C75 and C61/C91. Residues V104–L124 form a helical membrane-spanning segment. Topologically, residues T125 to G269 are cytoplasmic. The interval N171 to C237 is disordered. The span at V176–P190 shows a compositional bias: gly residues.

Its subcellular location is the cell membrane. The polypeptide is Sushi domain-containing protein 3 (Susd3) (Mus musculus (Mouse)).